A 96-amino-acid chain; its full sequence is Co-chaperonin GroES (96 aa).

This sequence belongs to the GroES chaperonin family. In terms of assembly, heptamer of 7 subunits arranged in a ring. Interacts with the chaperonin GroEL.

Its subcellular location is the cytoplasm. Functionally, together with the chaperonin GroEL, plays an essential role in assisting protein folding. The GroEL-GroES system forms a nano-cage that allows encapsulation of the non-native substrate proteins and provides a physical environment optimized to promote and accelerate protein folding. GroES binds to the apical surface of the GroEL ring, thereby capping the opening of the GroEL channel. This is Co-chaperonin GroES from Alteromonas mediterranea (strain DSM 17117 / CIP 110805 / LMG 28347 / Deep ecotype).